Consider the following 831-residue polypeptide: Periplasmic nitrate reductase (831 aa).

The tat-type signal signal peptide spans 1–31; that stretch reads MTISRRDLLKAQAAGIAAMAANIPLSSQAPA. Positions 41–97 constitute a 4Fe-4S Mo/W bis-MGD-type domain; it reads ITWSKAPCRFCGTGCGVMVGVKEGRVVATHGDLLAEVNRGLNCVKGYFLSKIMYGAD. [4Fe-4S] cluster is bound by residues cysteine 48, cysteine 51, cysteine 55, and cysteine 83. Residues lysine 85, glutamine 152, asparagine 177, cysteine 181, 214–221, 245–249, 264–266, methionine 375, glutamine 379, asparagine 485, 511–512, lysine 534, aspartate 561, and 721–730 contribute to the Mo-bis(molybdopterin guanine dinucleotide) site; these read WGSNMAEM, STFTH, GTD, SD, and TGRVLEHWHS. Residue tryptophan 797 coordinates substrate. Mo-bis(molybdopterin guanine dinucleotide) contacts are provided by asparagine 805 and lysine 822.

It belongs to the prokaryotic molybdopterin-containing oxidoreductase family. NasA/NapA/NarB subfamily. Component of the periplasmic nitrate reductase NapAB complex composed of NapA and NapB. The cofactor is [4Fe-4S] cluster. Mo-bis(molybdopterin guanine dinucleotide) serves as cofactor. Post-translationally, predicted to be exported by the Tat system. The position of the signal peptide cleavage has not been experimentally proven.

The protein resides in the periplasm. The enzyme catalyses 2 Fe(II)-[cytochrome] + nitrate + 2 H(+) = 2 Fe(III)-[cytochrome] + nitrite + H2O. Catalytic subunit of the periplasmic nitrate reductase complex NapAB. Receives electrons from NapB and catalyzes the reduction of nitrate to nitrite. This chain is Periplasmic nitrate reductase, found in Paracoccus pantotrophus (Thiosphaera pantotropha).